The primary structure comprises 80 residues: MKEQKWIHEGLITESLPNGMFRVRLDNVDNEDLILGYVSGRIRRSFIRILPGDRVKIEVSRYDSTRGRIIYRLRNKDSND.

The S1-like domain occupies 1–74 (MKEQKWIHEG…TRGRIIYRLR (74 aa)).

This sequence belongs to the IF-1 family. Component of the 30S ribosomal translation pre-initiation complex which assembles on the 30S ribosome in the order IF-2 and IF-3, IF-1 and N-formylmethionyl-tRNA(fMet); mRNA recruitment can occur at any time during PIC assembly.

It is found in the plastid. It localises to the chloroplast. One of the essential components for the initiation of protein synthesis. Stabilizes the binding of IF-2 and IF-3 on the 30S subunit to which N-formylmethionyl-tRNA(fMet) subsequently binds. Helps modulate mRNA selection, yielding the 30S pre-initiation complex (PIC). Upon addition of the 50S ribosomal subunit IF-1, IF-2 and IF-3 are released leaving the mature 70S translation initiation complex. This is Translation initiation factor IF-1, chloroplastic from Illicium oligandrum (Star anise).